The primary structure comprises 269 residues: Putative imidazole glycerol phosphate synthase subunit hisF2 (269 aa).

D133 is a catalytic residue.

Belongs to the HisA/HisF family. As to quaternary structure, heterodimer of HisH and HisF.

The protein localises to the cytoplasm. It catalyses the reaction 5-[(5-phospho-1-deoxy-D-ribulos-1-ylimino)methylamino]-1-(5-phospho-beta-D-ribosyl)imidazole-4-carboxamide + L-glutamine = D-erythro-1-(imidazol-4-yl)glycerol 3-phosphate + 5-amino-1-(5-phospho-beta-D-ribosyl)imidazole-4-carboxamide + L-glutamate + H(+). It functions in the pathway amino-acid biosynthesis; L-histidine biosynthesis; L-histidine from 5-phospho-alpha-D-ribose 1-diphosphate: step 5/9. Functionally, IGPS catalyzes the conversion of PRFAR and glutamine to IGP, AICAR and glutamate. The HisF subunit catalyzes the cyclization activity that produces IGP and AICAR from PRFAR using the ammonia provided by the HisH subunit. This is Putative imidazole glycerol phosphate synthase subunit hisF2 (hisF2) from Parasynechococcus marenigrum (strain WH8102).